Here is a 508-residue protein sequence, read N- to C-terminus: MGSFPFHRDLQEIASSQLTKALDPEEFRKQGHMVINFIADYYQNIEKYPVLSRVEPGYLKKCLPVSAPYDPEPISTILRDVQNHIVPGLTHWQSPNFFAYFSSTASTAGFLGEILTTGFNVVGFNWVSSPAATELENIVMDWLGDMLQLPKSFHFSGNGGGVLHGSTCEAIVCTMVAARDQMLRRIGSENLGKLVVYGSDQTHSTLQKATQIVGINTENFRAIKTTKSTGFALSPEMLRLTISSDLEKGLVPLFLCATIGTTATTAIDPLEALCHVAKEYGVWVHVDAAYAGSACICPEFRHFINGVEGANSFSFNPHKWLFTGMDCCCLWVKNPSVLASSLSTNPEFLRNKASDSKQVVDYKDWQIALSRRFRALKLWLVLRSYGVANLRNFIRIHVKMAKTFEGLVRMDKRFEILVPRNFSLVCFRISPSALISSNEDDEIGMVNEVNCKLLEAINASGKAYMTHAVVGGLYVLRCAVGATLTEEKHIVEAWNVVQDHAQAILSTY.

L-phenylalanine contacts are provided by His-203 and His-318. Residue Lys-319 is modified to N6-(pyridoxal phosphate)lysine. Phe-348 is an L-phenylalanine binding site.

Belongs to the group II decarboxylase family. Homotetramer. Pyridoxal 5'-phosphate serves as cofactor.

The enzyme catalyses L-phenylalanine + O2 + H2O + H(+) = 2-phenylacetaldehyde + H2O2 + NH4(+) + CO2. In terms of biological role, bifunctional enzyme that catalyzes the decarboxylation of L-phenylalanine to produce 2-phenylethylamine, which is then oxidized to form 2-phenylacetaldehyde, a constituent of floral scent in petals. 2-phenylacetaldehyde is a precursor of 2-phenylethanol, another constituent of floral scent in petals. This Rosa hybrid cultivar protein is Phenylacetaldehyde synthase.